The sequence spans 25 residues: Fibrinolytic enzyme large subunit (25 aa).

The Peptidase S1 domain maps to 1–25 (VIGGTNASPGEIPWQLSQQRQSGSW). The disordered stretch occupies residues 1 to 25 (VIGGTNASPGEIPWQLSQQRQSGSW). Polar residues predominate over residues 15 to 25 (QLSQQRQSGSW).

The protein belongs to the peptidase S1 family. In terms of assembly, heterodimer of a large and a small subunit held together by hydrophobic interactions.

Its function is as follows. Cleaves the carboxyl side of basic amino acids, small neutral amino acids, and Met residue. It is also a plasminogen activator. The polypeptide is Fibrinolytic enzyme large subunit (Eisenia fetida (Red wiggler worm)).